The sequence spans 473 residues: MAQLEGYYFSAALSCTFLVSCLLFSAFSRALREPYMDEIFHLPQAQRYCEGHFSLSQWDPMITTLPGLYLVSIGVIKPAIWIFGWSEHVVCSIGMLRFVNLLFSVGNFYLLYLLFCKVQPRNKAASSIQRVLSTLTLAVFPTLYFFNFLYYTEAGSMFFTLFAYLMCLYGNHKTSAFLGFCGFMFRQTNIIWAVFCAGNVIAQKLTEAWKTELQKKEDRLPPIKGPFAEFRKILQFLLAYSMSFKNLSMLLLLTWPYILLGFLFCAFVVVNGGIVIGDRSSHEACLHFPQLFYFFSFTLFFSFPHLLSPSKIKTFLSLVWKRRILFFVVTLVSVFLVWKFTYAHKYLLADNRHYTFYVWKRVFQRYETVKYLLVPAYIFAGWSIADSLKSKSIFWNLMFFICLFTVIVPQKLLEFRYFILPYVIYRLNIPLPPTSRLICELSCYAVVNFITFFIFLNKTFQWPNSQDIQRFMW.

The Cytoplasmic segment spans residues 1 to 6; it reads MAQLEG. A helical membrane pass occupies residues 7–27; that stretch reads YYFSAALSCTFLVSCLLFSAF. At 28–64 the chain is on the extracellular side; that stretch reads SRALREPYMDEIFHLPQAQRYCEGHFSLSQWDPMITT. A helical transmembrane segment spans residues 65–85; the sequence is LPGLYLVSIGVIKPAIWIFGW. At 86-97 the chain is on the cytoplasmic side; the sequence is SEHVVCSIGMLR. The chain crosses the membrane as a helical span at residues 98-118; that stretch reads FVNLLFSVGNFYLLYLLFCKV. The Extracellular segment spans residues 119 to 130; it reads QPRNKAASSIQR. The next 2 helical transmembrane spans lie at 131–151 and 152–172; these read VLST…FLYY and TEAG…YGNH. Residues 173 to 175 are Extracellular-facing; it reads KTS. A helical transmembrane segment spans residues 176–196; it reads AFLGFCGFMFRQTNIIWAVFC. Residues 197–249 lie on the Cytoplasmic side of the membrane; it reads AGNVIAQKLTEAWKTELQKKEDRLPPIKGPFAEFRKILQFLLAYSMSFKNLSM. A helical membrane pass occupies residues 250–270; that stretch reads LLLLTWPYILLGFLFCAFVVV. Residues 271-283 lie on the Extracellular side of the membrane; sequence NGGIVIGDRSSHE. Residues 284–304 traverse the membrane as a helical segment; it reads ACLHFPQLFYFFSFTLFFSFP. Residues 305-323 are Cytoplasmic-facing; the sequence is HLLSPSKIKTFLSLVWKRR. Residues 324–344 traverse the membrane as a helical segment; sequence ILFFVVTLVSVFLVWKFTYAH. Over 345–367 the chain is Extracellular; the sequence is KYLLADNRHYTFYVWKRVFQRYE. A helical transmembrane segment spans residues 368 to 388; that stretch reads TVKYLLVPAYIFAGWSIADSL. The Cytoplasmic segment spans residues 389–392; the sequence is KSKS. A helical membrane pass occupies residues 393-413; sequence IFWNLMFFICLFTVIVPQKLL. Over 414–436 the chain is Extracellular; it reads EFRYFILPYVIYRLNIPLPPTSR. A helical transmembrane segment spans residues 437 to 457; that stretch reads LICELSCYAVVNFITFFIFLN. Residues 458–473 are Cytoplasmic-facing; it reads KTFQWPNSQDIQRFMW.

This sequence belongs to the ALG10 glucosyltransferase family.

The protein resides in the endoplasmic reticulum membrane. The catalysed reaction is an alpha-D-Glc-(1-&gt;3)-alpha-D-Glc-(1-&gt;3)-alpha-D-Man-(1-&gt;2)-alpha-D-Man-(1-&gt;2)-alpha-D-Man-(1-&gt;3)-[alpha-D-Man-(1-&gt;2)-alpha-D-Man-(1-&gt;3)-[alpha-D-Man-(1-&gt;2)-alpha-D-Man-(1-&gt;6)]-alpha-D-Man-(1-&gt;6)]-beta-D-Man-(1-&gt;4)-beta-D-GlcNAc-(1-&gt;4)-alpha-D-GlcNAc-diphospho-di-trans,poly-cis-dolichol + a di-trans,poly-cis-dolichyl beta-D-glucosyl phosphate = a alpha-D-Glc-(1-&gt;2)-alpha-D-Glc-(1-&gt;3)-alpha-D-Glc-(1-&gt;3)-alpha-D-Man-(1-&gt;2)-alpha-D-Man-(1-&gt;2)-alpha-D-Man-(1-&gt;3)-[alpha-D-Man-(1-&gt;2)-alpha-D-Man-(1-&gt;3)-[alpha-D-Man-(1-&gt;2)-alpha-D-Man-(1-&gt;6)]-alpha-D-Man-(1-&gt;6)]-beta-D-Man-(1-&gt;4)-beta-D-GlcNAc-(1-&gt;4)-alpha-D-GlcNAc-diphospho-di-trans,poly-cis-dolichol + a di-trans,poly-cis-dolichyl phosphate + H(+). It functions in the pathway protein modification; protein glycosylation. Dol-P-Glc:Glc(2)Man(9)GlcNAc(2)-PP-Dol alpha-1,2-glucosyltransferase that operates in the biosynthetic pathway of dolichol-linked oligosaccharides, the glycan precursors employed in protein asparagine (N)-glycosylation. The assembly of dolichol-linked oligosaccharides begins on the cytosolic side of the endoplasmic reticulum membrane and finishes in its lumen. The sequential addition of sugars to dolichol pyrophosphate produces dolichol-linked oligosaccharides containing fourteen sugars, including two GlcNAcs, nine mannoses and three glucoses. Once assembled, the oligosaccharide is transferred from the lipid to nascent proteins by oligosaccharyltransferases. In the lumen of the endoplasmic reticulum, adds the third and last glucose residue from dolichyl phosphate glucose (Dol-P-Glc) onto the lipid-linked oligosaccharide intermediate Glc(2)Man(9)GlcNAc(2)-PP-Dol to produce Glc(3)Man(9)GlcNAc(2)-PP-Dol. The polypeptide is Dol-P-Glc:Glc(2)Man(9)GlcNAc(2)-PP-Dol alpha-1,2-glucosyltransferase (Homo sapiens (Human)).